The following is a 679-amino-acid chain: Cysteine-rich receptor-like protein kinase 29 (679 aa).

A signal peptide spans methionine 1–alanine 23. Topologically, residues glutamine 24–lysine 286 are extracellular. Gnk2-homologous domains follow at residues phenylalanine 30–isoleucine 134 and threonine 140–phenylalanine 249. Asparagine 41, asparagine 45, asparagine 71, asparagine 107, asparagine 131, and asparagine 187 each carry an N-linked (GlcNAc...) asparagine glycan. The tract at residues proline 260–glycine 281 is disordered. A helical membrane pass occupies residues valine 287 to leucine 307. Residues valine 308–arginine 679 lie on the Cytoplasmic side of the membrane. One can recognise a Protein kinase domain in the interval phenylalanine 357–threonine 637. ATP is bound by residues leucine 363–valine 371 and lysine 385. The residue at position 430 (tyrosine 430) is a Phosphotyrosine. Aspartate 482 functions as the Proton acceptor in the catalytic mechanism. A Phosphoserine modification is found at serine 486. Threonine 524 carries the post-translational modification Phosphothreonine. Tyrosine 532 bears the Phosphotyrosine mark. The interval serine 659–arginine 679 is disordered.

Belongs to the protein kinase superfamily. Ser/Thr protein kinase family. CRK subfamily.

The protein localises to the membrane. The catalysed reaction is L-seryl-[protein] + ATP = O-phospho-L-seryl-[protein] + ADP + H(+). It catalyses the reaction L-threonyl-[protein] + ATP = O-phospho-L-threonyl-[protein] + ADP + H(+). The chain is Cysteine-rich receptor-like protein kinase 29 (CRK29) from Arabidopsis thaliana (Mouse-ear cress).